A 634-amino-acid polypeptide reads, in one-letter code: Threonine--tRNA ligase (634 aa).

A TGS domain is found at 1–61 (MINITLPDGS…DHDASLRIIT (61 aa)). Positions 243-534 (DHRRIGKAQD…LIEHHAGAFP (292 aa)) are catalytic. Residues cysteine 334, histidine 385, and histidine 511 each coordinate Zn(2+).

It belongs to the class-II aminoacyl-tRNA synthetase family. In terms of assembly, homodimer. Requires Zn(2+) as cofactor.

It is found in the cytoplasm. It carries out the reaction tRNA(Thr) + L-threonine + ATP = L-threonyl-tRNA(Thr) + AMP + diphosphate + H(+). Its function is as follows. Catalyzes the attachment of threonine to tRNA(Thr) in a two-step reaction: L-threonine is first activated by ATP to form Thr-AMP and then transferred to the acceptor end of tRNA(Thr). Also edits incorrectly charged L-seryl-tRNA(Thr). The protein is Threonine--tRNA ligase of Xanthomonas axonopodis pv. citri (strain 306).